Reading from the N-terminus, the 280-residue chain is 2-dehydro-3-deoxyphosphooctonate aldolase (280 aa).

The protein belongs to the KdsA family.

It is found in the cytoplasm. It catalyses the reaction D-arabinose 5-phosphate + phosphoenolpyruvate + H2O = 3-deoxy-alpha-D-manno-2-octulosonate-8-phosphate + phosphate. It functions in the pathway carbohydrate biosynthesis; 3-deoxy-D-manno-octulosonate biosynthesis; 3-deoxy-D-manno-octulosonate from D-ribulose 5-phosphate: step 2/3. The protein operates within bacterial outer membrane biogenesis; lipopolysaccharide biosynthesis. This chain is 2-dehydro-3-deoxyphosphooctonate aldolase, found in Neisseria meningitidis serogroup C / serotype 2a (strain ATCC 700532 / DSM 15464 / FAM18).